The chain runs to 267 residues: Hydroxyethylthiazole kinase (267 aa).

Residue Met-48 participates in substrate binding. ATP-binding residues include Arg-124 and Ser-170. Gly-197 provides a ligand contact to substrate.

It belongs to the Thz kinase family. It depends on Mg(2+) as a cofactor.

The catalysed reaction is 5-(2-hydroxyethyl)-4-methylthiazole + ATP = 4-methyl-5-(2-phosphooxyethyl)-thiazole + ADP + H(+). The protein operates within cofactor biosynthesis; thiamine diphosphate biosynthesis; 4-methyl-5-(2-phosphoethyl)-thiazole from 5-(2-hydroxyethyl)-4-methylthiazole: step 1/1. Its function is as follows. Catalyzes the phosphorylation of the hydroxyl group of 4-methyl-5-beta-hydroxyethylthiazole (THZ). The protein is Hydroxyethylthiazole kinase of Aliivibrio fischeri (strain ATCC 700601 / ES114) (Vibrio fischeri).